The sequence spans 95 residues: uncharacterized protein (95 aa).

Positions methionine 1–valine 21 are cleaved as a signal peptide.

This is an uncharacterized protein from Archaeoglobus fulgidus (strain ATCC 49558 / DSM 4304 / JCM 9628 / NBRC 100126 / VC-16).